The chain runs to 154 residues: 17 kDa A-type inclusion protein (154 aa).

Residues 17-85 are a coiled coil; that stretch reads QKDCSDKLDR…YKRELERDRY (69 aa). The segment at 88 to 154 is disordered; the sequence is SRYLTSSSDP…DVEPEHPPAF (67 aa).

This is 17 kDa A-type inclusion protein from Bos taurus (Bovine).